We begin with the raw amino-acid sequence, 534 residues long: Arginine transporter 1 (534 aa).

Helical transmembrane passes span 35–55 (YVLLVIYMIYALLTSSVYFGW), 99–119 (SLFTIAMACHFTCSAVAGYLL), 126–146 (AVALLGQTFNALAWILLAFSG), 154–174 (PAFVFMGAGADVSVYPTLLIV), 182–202 (ALIMATLGACISLSFFVPLVL), and 216–236 (VCIGYAVAGPILCAVVAFFFI). An N-linked (GlcNAc...) asparagine glycan is attached at Asn246. A disordered region spans residues 261–302 (TAQSSPKAVDSPPCDEGASSRGRLAVSHNTERTAPDDEQEKD). Over residues 289 to 302 (NTERTAPDDEQEKD) the composition is skewed to basic and acidic residues. 6 helical membrane-spanning segments follow: residues 329 to 349 (AFTFLYFGICLYFTVCGWVMA), 365 to 385 (YTLEILTPLSTIPCLLFGVVI), 388 to 408 (IGIMPVILMLNTIGLLTYVCV), 419 to 439 (FSVIFFFMYISIFTTQMYVFV), 451 to 471 (LIGVASLIGGLLSLISNVLYG), and 483 to 503 (RPVVIALLAVIILMYPILLAM).

Belongs to the SLC43A transporter (TC 2.A.1.44) family.

It is found in the cell membrane. It catalyses the reaction L-arginine(in) = L-arginine(out). Selective L-arginine transporter that is essential for parasite survival and virulence. Does not require other inorganic ions such as sodium, chloride, potassium or calcium. This Toxoplasma gondii (strain ATCC 50611 / Me49) protein is Arginine transporter 1.